Here is a 130-residue protein sequence, read N- to C-terminus: MSLDYCLMVTGPAYGNQRASSALQFARALLECGHRLGTVFFYQDGVHNANRLSAPAGDEVDLVRAWHELAQQHQVALHVCAAAALRRGVTDALQASLLKRSGENLQPGFELSGLGSLVQAALGCDRFIQF.

The active-site Cysteine persulfide intermediate is cysteine 80.

This sequence belongs to the DsrE/TusD family. Heterohexamer, formed by a dimer of trimers. The hexameric TusBCD complex contains 2 copies each of TusB, TusC and TusD. The TusBCD complex interacts with TusE.

The protein resides in the cytoplasm. Functionally, part of a sulfur-relay system required for 2-thiolation of 5-methylaminomethyl-2-thiouridine (mnm(5)s(2)U) at tRNA wobble positions. Accepts sulfur from TusA and transfers it in turn to TusE. This Sodalis glossinidius (strain morsitans) protein is Sulfurtransferase TusD.